The chain runs to 172 residues: NADH-ubiquinone oxidoreductase chain 6 (172 aa).

The next 6 membrane-spanning stretches (helical) occupy residues 1–21, 25–45, 48–68, 86–106, 108–128, and 141–161; these read MLSL…VVVL, PYFS…IVLY, GTFL…VVFV, VIWF…MSFN, FFLD…IFGA, and LILV…LVVV.

This sequence belongs to the complex I subunit 6 family.

The protein resides in the mitochondrion membrane. The enzyme catalyses a ubiquinone + NADH + 5 H(+)(in) = a ubiquinol + NAD(+) + 4 H(+)(out). Functionally, core subunit of the mitochondrial membrane respiratory chain NADH dehydrogenase (Complex I) that is believed to belong to the minimal assembly required for catalysis. Complex I functions in the transfer of electrons from NADH to the respiratory chain. The immediate electron acceptor for the enzyme is believed to be ubiquinone. The protein is NADH-ubiquinone oxidoreductase chain 6 (MT-ND6) of Petromyzon marinus (Sea lamprey).